Consider the following 292-residue polypeptide: Early E4 34 kDa protein (292 aa).

It belongs to the adenoviridae E4 30 to 34 kDa protein family. As to quaternary structure, interacts with E1B-55k.

Its subcellular location is the host nucleus. It is found in the host cytoplasm. Its function is as follows. Plays a major role to prevent cellular inhibition of viral genome replication by nuclear bodies. Assembles an SCF-like E3 ubiquitin ligase complex based on the cellular proteins ELOB, ELOC, CUL5 and RBX1, in cooperation with viral E1B-55K. This viral RING-type ligase ubiquitinates cellular substrates prior to proteasomal degradation: p53/TP53, LIG4, MRE11-RAD50-NBS1 (MRN) complex, ITGA3, DAXX and BLM. The chain is Early E4 34 kDa protein from Human adenovirus D serotype 9 (HAdV-9).